Here is a 470-residue protein sequence, read N- to C-terminus: MDTTMEADLGATGHRPRTELDDEDSYPQGGWDTVFLVALLLLGLPANGLMAWLAGSQARHGAGTRLALLLLSLALSDFLFLAAAAFQILEIRHGGHWPLGTAACRFYYFLWGVSYSSGLFLLAALSLDRCLLALCPHWYPGHRPVRLPLWVCAGVWVLATLFSVPWLVFPEAAVWWYDLVICLDFWDSEELSLRMLEVLGGFLPFLLLLVCHVLTQATACRTCHRQQQPAACRGFARVARTILSAYVVLRLPYQLAQLLYLAFLWDVYSGYLLWEALVYSDYLILLNSCLSPFLCLMASADLRTLLRSVLSSFAAALCEERPGSFTPTEPQTQLDSEGPTLPEPMAEAQSQMDPVAQPQVNPTLQPRSDPTAQPQLNPTAQPQSDPTAQPQLNLMAQPQSDSVAQPQADTNVQTPAPAASSVPSPCDEASPTPSSHPTPGALEDPATPPASEGESPSSTPPEAAPGAGPT.

Residues 1-25 (MDTTMEADLGATGHRPRTELDDEDS) are disordered. Residues 1-33 (MDTTMEADLGATGHRPRTELDDEDSYPQGGWDT) are Extracellular-facing. Residues 34-54 (VFLVALLLLGLPANGLMAWLA) form a helical membrane-spanning segment. The Cytoplasmic portion of the chain corresponds to 55–65 (GSQARHGAGTR). The chain crosses the membrane as a helical span at residues 66–86 (LALLLLSLALSDFLFLAAAAF). Residues 87-105 (QILEIRHGGHWPLGTAACR) lie on the Extracellular side of the membrane. Cysteines 104 and 182 form a disulfide. A helical transmembrane segment spans residues 106–126 (FYYFLWGVSYSSGLFLLAALS). The Cytoplasmic segment spans residues 127 to 148 (LDRCLLALCPHWYPGHRPVRLP). Residues 149 to 169 (LWVCAGVWVLATLFSVPWLVF) traverse the membrane as a helical segment. Residues 170–194 (PEAAVWWYDLVICLDFWDSEELSLR) are Extracellular-facing. Residues 195-215 (MLEVLGGFLPFLLLLVCHVLT) traverse the membrane as a helical segment. At 216–257 (QATACRTCHRQQQPAACRGFARVARTILSAYVVLRLPYQLAQ) the chain is on the cytoplasmic side. Residues 258 to 278 (LLYLAFLWDVYSGYLLWEALV) form a helical membrane-spanning segment. Topologically, residues 279-281 (YSD) are extracellular. A helical transmembrane segment spans residues 282–302 (YLILLNSCLSPFLCLMASADL). Residues 303–470 (RTLLRSVLSS…PEAAPGAGPT (168 aa)) lie on the Cytoplasmic side of the membrane. A disordered region spans residues 322-470 (PGSFTPTEPQ…PEAAPGAGPT (149 aa)). Composition is skewed to polar residues over residues 325-335 (FTPTEPQTQLD) and 348-414 (AQSQ…NVQT). Residues 415-425 (PAPAASSVPSP) are compositionally biased toward low complexity.

This sequence belongs to the G-protein coupled receptor 1 family.

The protein resides in the cell membrane. Functionally, orphan receptor. In Homo sapiens (Human), this protein is Probable G-protein coupled receptor 152 (GPR152).